Reading from the N-terminus, the 117-residue chain is Large ribosomal subunit protein eL18 (117 aa).

It belongs to the eukaryotic ribosomal protein eL18 family.

The polypeptide is Large ribosomal subunit protein eL18 (Archaeoglobus fulgidus (strain ATCC 49558 / DSM 4304 / JCM 9628 / NBRC 100126 / VC-16)).